A 193-amino-acid polypeptide reads, in one-letter code: Fe/S biogenesis protein NfuA (193 aa).

[4Fe-4S] cluster is bound by residues cysteine 150 and cysteine 153.

This sequence belongs to the NfuA family. In terms of assembly, homodimer. It depends on [4Fe-4S] cluster as a cofactor.

Involved in iron-sulfur cluster biogenesis. Binds a 4Fe-4S cluster, can transfer this cluster to apoproteins, and thereby intervenes in the maturation of Fe/S proteins. Could also act as a scaffold/chaperone for damaged Fe/S proteins. The protein is Fe/S biogenesis protein NfuA of Histophilus somni (strain 129Pt) (Haemophilus somnus).